Here is a 1028-residue protein sequence, read N- to C-terminus: GPI inositol-deacylase (1028 aa).

Residues 51–71 (VFGLGLLLFCIVCMAYLSPFL) form a helical membrane-spanning segment. N-linked (GlcNAc...) asparagine glycosylation is present at asparagine 166. The active site involves serine 231. Residues asparagine 299, asparagine 530, asparagine 586, and asparagine 679 are each glycosylated (N-linked (GlcNAc...) asparagine). 8 helical membrane-spanning segments follow: residues 699–719 (LAVA…QFAL), 740–760 (FWLK…ISFI), 799–819 (WIGP…AFGI), 867–887 (IMIL…LLFL), 915–935 (SYLL…FVFL), 948–968 (SHHN…NAGL), 979–999 (ISKL…VIYG), and 1002–1022 (NLFW…FTSL).

The protein belongs to the GPI inositol-deacylase family.

The protein resides in the endoplasmic reticulum membrane. In terms of biological role, involved in inositol deacylation of GPI-anchored proteins which plays important roles in the quality control and ER-associated degradation of GPI-anchored proteins. This Eremothecium gossypii (strain ATCC 10895 / CBS 109.51 / FGSC 9923 / NRRL Y-1056) (Yeast) protein is GPI inositol-deacylase (BST1).